We begin with the raw amino-acid sequence, 218 residues long: Ribonuclease HII (218 aa).

An RNase H type-2 domain is found at 23–216 (RFLCGVDEAG…VREAIARGLV (194 aa)). A divalent metal cation is bound by residues Asp-29, Glu-30, and Asp-125.

The protein belongs to the RNase HII family. Mn(2+) serves as cofactor. Requires Mg(2+) as cofactor.

It localises to the cytoplasm. The catalysed reaction is Endonucleolytic cleavage to 5'-phosphomonoester.. Functionally, endonuclease that specifically degrades the RNA of RNA-DNA hybrids. The polypeptide is Ribonuclease HII (Cupriavidus pinatubonensis (strain JMP 134 / LMG 1197) (Cupriavidus necator (strain JMP 134))).